The following is a 132-amino-acid chain: Protein KRTCAP2 homolog (132 aa).

Transmembrane regions (helical) follow at residues 1-21 (MAVPTSVSLVLASVTAVLIFS), 35-55 (MATVFGGFLGSWLFILSLTAV), 69-89 (AKLFPEVAFCLIGSLFACGMV), and 92-109 (VCATTCILFSVAALYYIN).

Belongs to the KRTCAP2 family. As to quaternary structure, component of the oligosaccharyltransferase (OST) complex.

The protein resides in the membrane. Its function is as follows. Subunit of the oligosaccharyl transferase (OST) complex that catalyzes the initial transfer of a defined glycan (Glc(3)Man(9)GlcNAc(2) in eukaryotes) from the lipid carrier dolichol-pyrophosphate to an asparagine residue within an Asn-X-Ser/Thr consensus motif in nascent polypeptide chains, the first step in protein N-glycosylation. N-glycosylation occurs cotranslationally and the complex associates with the Sec61 complex at the channel-forming translocon complex that mediates protein translocation across the endoplasmic reticulum (ER). All subunits are required for a maximal enzyme activity. The protein is Protein KRTCAP2 homolog of Aedes aegypti (Yellowfever mosquito).